Reading from the N-terminus, the 306-residue chain is Elongation factor Ts (306 aa).

The interval 80 to 83 (TDFV) is involved in Mg(2+) ion dislocation from EF-Tu.

It belongs to the EF-Ts family.

Its subcellular location is the cytoplasm. Associates with the EF-Tu.GDP complex and induces the exchange of GDP to GTP. It remains bound to the aminoacyl-tRNA.EF-Tu.GTP complex up to the GTP hydrolysis stage on the ribosome. The chain is Elongation factor Ts from Leptothrix cholodnii (strain ATCC 51168 / LMG 8142 / SP-6) (Leptothrix discophora (strain SP-6)).